Consider the following 256-residue polypeptide: Deoxyribose-phosphate aldolase (256 aa).

Aspartate 102 functions as the Proton donor/acceptor in the catalytic mechanism. The active-site Schiff-base intermediate with acetaldehyde is the lysine 165. Lysine 197 acts as the Proton donor/acceptor in catalysis.

Belongs to the DeoC/FbaB aldolase family. DeoC type 2 subfamily.

It is found in the cytoplasm. It carries out the reaction 2-deoxy-D-ribose 5-phosphate = D-glyceraldehyde 3-phosphate + acetaldehyde. It participates in carbohydrate degradation; 2-deoxy-D-ribose 1-phosphate degradation; D-glyceraldehyde 3-phosphate and acetaldehyde from 2-deoxy-alpha-D-ribose 1-phosphate: step 2/2. In terms of biological role, catalyzes a reversible aldol reaction between acetaldehyde and D-glyceraldehyde 3-phosphate to generate 2-deoxy-D-ribose 5-phosphate. This Shewanella oneidensis (strain ATCC 700550 / JCM 31522 / CIP 106686 / LMG 19005 / NCIMB 14063 / MR-1) protein is Deoxyribose-phosphate aldolase.